The sequence spans 96 residues: Cytochrome c-553 (96 aa).

Positions 1 to 19 (MKKVIVALGVLAFANVLMA) are cleaved as a signal peptide. The heme c site is built by C29, C32, H33, and M73.

This sequence belongs to the cytochrome c family. Post-translationally, binds 1 heme c group covalently per subunit.

Its subcellular location is the periplasm. Natural electron acceptor for a formate dehydrogenase. The polypeptide is Cytochrome c-553 (Helicobacter pylori (strain J99 / ATCC 700824) (Campylobacter pylori J99)).